Consider the following 640-residue polypeptide: MSRVIGIDLGTTNSCVAVMEGGEPVVIANAEGSRTTPSMIAFAESGERLVGQQAKRQAVTNPENTLYAIKRLIGRKFDTEAVKKDIAISPFKIVKADNSDAWVEVRGQKYSPPEISAMVLQKMKKTAEDYLGETVTDAVITVPAYFDDSQRQATKDAGKIAGLNVLRIINEPTAAALAYGLDKKKDEKIAVFDLGGGTFDVSILELGEGVFEVKSTNGDTFLGGEDFDQKIIDHIADEFKKDQGIDLRGDKMALQRLKEAGEKAKCELSTSLETDINLPFITADASGPKHLTMKLTRAKLESICAELIANLEGPCRTALKDAGLSASDIDEVILVGGMTRMPIVQKKVQDIFGKVPNRGVNPDEVVAIGAAIQGGVLRGDVKDVLLLDVTPLSLGIETLGGVLTKLIDKNSTIPCRKSQVFSTAADNQPAVSIHVLQGEREMAADNKTLGNFELSGIPSAPRGVPQIEVTFDIDANGIVHVSAKDLGTGKEQSIRITASSGLSKEEVEKMVREAEAHAADDKKKRELIEAKNQADNLIYQTEKSLTEFGDKIDASEKQKIEEGVAALKKALEGSDADEIKKASDSLMQASHKLAEAVYAKTQGAGAEGSEQPHGEQEAGGAAKGETVVDADFEEVKDDKK.

T198 bears the Phosphothreonine; by autocatalysis mark. The tract at residues 600 to 640 is disordered; sequence KTQGAGAEGSEQPHGEQEAGGAAKGETVVDADFEEVKDDKK. A compositionally biased stretch (acidic residues) spans 628–640; the sequence is VDADFEEVKDDKK.

Belongs to the heat shock protein 70 family.

In terms of biological role, acts as a chaperone. The chain is Chaperone protein DnaK from Geobacter sp. (strain M21).